Consider the following 101-residue polypeptide: Apolipoprotein C-II (101 aa).

A signal peptide spans 1–22 (MGTRFLLALCLVLLVLGFEVQG). A lipid binding region spans residues 66-74 (AVDEKLRDL). Residues 78-101 (STAAMSTYTGIFTDQVLSVLKGEE) are lipoprotein lipase cofactor.

It belongs to the apolipoprotein C2 family. Post-translationally, proapolipoprotein C-II is synthesized as a sialic acid containing glycoprotein which is subsequently desialylated prior to its proteolytic processing. Proapolipoprotein C-II, the major form found in plasma undergoes proteolytic cleavage of its N-terminal hexapeptide to generate apolipoprotein C-II, which occurs as the minor form in plasma.

Its subcellular location is the secreted. In terms of biological role, component of chylomicrons, very low-density lipoproteins (VLDL), low-density lipoproteins (LDL), and high-density lipoproteins (HDL) in plasma. Plays an important role in lipoprotein metabolism as an activator of lipoprotein lipase. Both proapolipoprotein C-II and apolipoprotein C-II can activate lipoprotein lipase. In Macaca fascicularis (Crab-eating macaque), this protein is Apolipoprotein C-II (APOC2).